We begin with the raw amino-acid sequence, 731 residues long: Vezatin (731 aa).

A run of 2 helical transmembrane segments spans residues 91-111 (LATP…LLVM) and 114-134 (TWWI…YLVI). A coiled-coil region spans residues 382–414 (VRSLQLHLKALLNEVIILEDELEKLVCTKETQE). Disordered stretches follow at residues 570-671 (PVDP…DSLQ) and 710-731 (QTFG…IEEK). Polar residues predominate over residues 577–586 (ISNSEPSMNS). Residues 590 to 601 (KVSKNDTEEESS) are compositionally biased toward basic and acidic residues. A compositionally biased stretch (polar residues) spans 658–671 (GLTTAPPTPRDSLQ). The span at 712 to 721 (FGDEEEEQII) shows a compositional bias: acidic residues. Positions 722 to 731 (EENKNKIEEK) are enriched in basic and acidic residues.

This sequence belongs to the vezatin family. In terms of assembly, interacts with USH2A (via the cytoplasmic region); the interaction associates VEZT with the USH2 complex at the stereocilia base. Interacts with myosin MYO7A and the cadherin-catenins complex.

Its subcellular location is the cell membrane. It localises to the cell projection. The protein localises to the stereocilium membrane. It is found in the cell junction. The protein resides in the adherens junction. Its subcellular location is the nucleus. It localises to the cytoplasmic vesicle. The protein localises to the secretory vesicle. It is found in the acrosome. In terms of biological role, plays a pivotal role in the establishment of adherens junctions and their maintenance in adult life. Required for morphogenesis of the preimplantation embryo, and for the implantation process. The polypeptide is Vezatin (VEZT) (Pongo abelii (Sumatran orangutan)).